The chain runs to 101 residues: DNA-binding protein Fis (101 aa).

Positions 77 to 96 form a DNA-binding region, H-T-H motif; the sequence is QTRAANMLGINRGTLRKKLK.

The protein belongs to the transcriptional regulatory Fis family. As to quaternary structure, homodimer.

Activates ribosomal RNA transcription. Plays a direct role in upstream activation of rRNA promoters. The polypeptide is DNA-binding protein Fis (Shewanella loihica (strain ATCC BAA-1088 / PV-4)).